Here is a 362-residue protein sequence, read N- to C-terminus: Adenosine deaminase (362 aa).

Zn(2+)-binding residues include histidine 19 and histidine 21. Residues histidine 21, aspartate 23, and glycine 181 each contribute to the substrate site. Zn(2+) is bound at residue histidine 208. The Proton donor role is filled by glutamate 211. Aspartate 300 serves as a coordination point for Zn(2+).

Belongs to the metallo-dependent hydrolases superfamily. Adenosine and AMP deaminases family. Adenosine deaminase subfamily. It depends on Zn(2+) as a cofactor.

The enzyme catalyses adenosine + H2O + H(+) = inosine + NH4(+). It catalyses the reaction 2'-deoxyadenosine + H2O + H(+) = 2'-deoxyinosine + NH4(+). Catalyzes the hydrolytic deamination of adenosine and 2-deoxyadenosine. The protein is Adenosine deaminase of Mycobacteroides abscessus (strain ATCC 19977 / DSM 44196 / CCUG 20993 / CIP 104536 / JCM 13569 / NCTC 13031 / TMC 1543 / L948) (Mycobacterium abscessus).